Consider the following 491-residue polypeptide: UDP-N-acetylmuramate--L-alanine ligase (491 aa).

126 to 132 serves as a coordination point for ATP; that stretch reads GTHGKTT.

This sequence belongs to the MurCDEF family.

Its subcellular location is the cytoplasm. It catalyses the reaction UDP-N-acetyl-alpha-D-muramate + L-alanine + ATP = UDP-N-acetyl-alpha-D-muramoyl-L-alanine + ADP + phosphate + H(+). It participates in cell wall biogenesis; peptidoglycan biosynthesis. Its function is as follows. Cell wall formation. The polypeptide is UDP-N-acetylmuramate--L-alanine ligase (Shigella sonnei (strain Ss046)).